Reading from the N-terminus, the 392-residue chain is Na(+)/H(+) antiporter NhaA (392 aa).

11 helical membrane passes run 17–37 (ILLIVAAIIALIMANTPLSAL), 59–79 (LILWVNDALMAIFFLVVGLEV), 95–115 (IFPAIAAVGGMLAPALIYLFF), 125–145 (GWAIPAATDIAFALGVMALLG), 154–174 (VFLLALAIIDDLGVIVIIALF), 179–199 (VALVPLLLAALITIMLFILNW), 213–233 (FILWVCILKSGIHATIAGVIV), 254–274 (VLHPWVAYLILPLFAFSNAGV), 290–310 (VGIALGLFLGKPIGIFLFSWV), 328–348 (IFAVSVLCGIGFTMSIFIAGL), and 363–383 (LGILVGSTMAAVVGYLLLNSV).

This sequence belongs to the NhaA Na(+)/H(+) (TC 2.A.33) antiporter family.

It localises to the cell inner membrane. It carries out the reaction Na(+)(in) + 2 H(+)(out) = Na(+)(out) + 2 H(+)(in). Functionally, na(+)/H(+) antiporter that extrudes sodium in exchange for external protons. The polypeptide is Na(+)/H(+) antiporter NhaA (Proteus mirabilis (strain HI4320)).